The following is a 206-amino-acid chain: MTKRTAAKYKIDRRMGENIWGRAKSPLNRREYGPGQHGQRRKGKLSDFGTQLRAKQKLKGYYGDLTEKQFRRIYAEAERVKGDTGENLIGLLERRLDAVIYRAKFVPTIFAARQFVNHGHVEVNGKRVNIASYRVKEGDVVSIRERSRQLAIVLESVGLAERDVPDYLEVDHNKMTATFVRTPALGDVPYAVQMEPNLVVEFYAKN.

The segment at Ala-23 to Asp-47 is disordered. Residues Arg-94–Val-157 form the S4 RNA-binding domain.

This sequence belongs to the universal ribosomal protein uS4 family. Part of the 30S ribosomal subunit. Contacts protein S5. The interaction surface between S4 and S5 is involved in control of translational fidelity.

Functionally, one of the primary rRNA binding proteins, it binds directly to 16S rRNA where it nucleates assembly of the body of the 30S subunit. Its function is as follows. With S5 and S12 plays an important role in translational accuracy. The chain is Small ribosomal subunit protein uS4 from Paracoccus denitrificans (strain Pd 1222).